The primary structure comprises 250 residues: NAD(P)H-quinone oxidoreductase subunit K (250 aa).

Residues Cys60, Cys61, Cys125, and Cys156 each coordinate [4Fe-4S] cluster. The segment at 230 to 250 is disordered; sequence ELNTSEIDASPASQPSSTYES. Positions 231-250 are enriched in polar residues; that stretch reads LNTSEIDASPASQPSSTYES.

This sequence belongs to the complex I 20 kDa subunit family. In terms of assembly, NDH-1 can be composed of about 15 different subunits; different subcomplexes with different compositions have been identified which probably have different functions. Requires [4Fe-4S] cluster as cofactor.

The protein localises to the cellular thylakoid membrane. It carries out the reaction a plastoquinone + NADH + (n+1) H(+)(in) = a plastoquinol + NAD(+) + n H(+)(out). It catalyses the reaction a plastoquinone + NADPH + (n+1) H(+)(in) = a plastoquinol + NADP(+) + n H(+)(out). Functionally, NDH-1 shuttles electrons from an unknown electron donor, via FMN and iron-sulfur (Fe-S) centers, to quinones in the respiratory and/or the photosynthetic chain. The immediate electron acceptor for the enzyme in this species is believed to be plastoquinone. Couples the redox reaction to proton translocation, and thus conserves the redox energy in a proton gradient. Cyanobacterial NDH-1 also plays a role in inorganic carbon-concentration. In Prochlorococcus marinus (strain MIT 9303), this protein is NAD(P)H-quinone oxidoreductase subunit K.